Here is a 271-residue protein sequence, read N- to C-terminus: Tryptophan synthase alpha chain (271 aa).

Active-site proton acceptor residues include Glu-49 and Asp-60.

It belongs to the TrpA family. In terms of assembly, tetramer of two alpha and two beta chains.

It catalyses the reaction (1S,2R)-1-C-(indol-3-yl)glycerol 3-phosphate + L-serine = D-glyceraldehyde 3-phosphate + L-tryptophan + H2O. It participates in amino-acid biosynthesis; L-tryptophan biosynthesis; L-tryptophan from chorismate: step 5/5. In terms of biological role, the alpha subunit is responsible for the aldol cleavage of indoleglycerol phosphate to indole and glyceraldehyde 3-phosphate. This is Tryptophan synthase alpha chain from Nitrosococcus oceani (strain ATCC 19707 / BCRC 17464 / JCM 30415 / NCIMB 11848 / C-107).